Here is a 508-residue protein sequence, read N- to C-terminus: Glycogen synthase (508 aa).

Residue Lys15 coordinates ADP-alpha-D-glucose. Residues 483–508 (ARNRAETRPQTASALSYREPRPAAEY) are disordered.

This sequence belongs to the glycosyltransferase 1 family. Bacterial/plant glycogen synthase subfamily.

The catalysed reaction is [(1-&gt;4)-alpha-D-glucosyl](n) + ADP-alpha-D-glucose = [(1-&gt;4)-alpha-D-glucosyl](n+1) + ADP + H(+). Its pathway is glycan biosynthesis; glycogen biosynthesis. Functionally, synthesizes alpha-1,4-glucan chains using ADP-glucose. In Paracidovorax citrulli (strain AAC00-1) (Acidovorax citrulli), this protein is Glycogen synthase.